The chain runs to 250 residues: Acidic endochitinase (250 aa).

Residue Gln-1 is modified to Pyrrolidone carboxylic acid. The Chitin-binding type-1 domain occupies 1 to 36 (QNCQCDTTIYCCSQHGYCGNSYDYCGPGCQAGPCWD). 7 cysteine pairs are disulfide-bonded: Cys-3-Cys-12, Cys-5-Cys-18, Cys-11-Cys-25, Cys-29-Cys-34, Cys-66-Cys-115, Cys-128-Cys-136, and Cys-218-Cys-250. Glu-110 functions as the Proton donor in the catalytic mechanism.

Belongs to the glycosyl hydrolase 19 family. Chitinase class I subfamily.

It carries out the reaction Random endo-hydrolysis of N-acetyl-beta-D-glucosaminide (1-&gt;4)-beta-linkages in chitin and chitodextrins.. Defense against chitin-containing fungal pathogens. The protein is Acidic endochitinase of Dioscorea japonica (Japanese yam).